Reading from the N-terminus, the 192-residue chain is Adapter protein MecA (192 aa).

The protein belongs to the MecA family. As to quaternary structure, homodimer.

Functionally, enables the recognition and targeting of unfolded and aggregated proteins to the ClpC protease or to other proteins involved in proteolysis. Acts negatively in the development of competence by binding ComK and recruiting it to the ClpCP protease. When overexpressed, inhibits sporulation. Also involved in Spx degradation by ClpC. In Oceanobacillus iheyensis (strain DSM 14371 / CIP 107618 / JCM 11309 / KCTC 3954 / HTE831), this protein is Adapter protein MecA.